We begin with the raw amino-acid sequence, 249 residues long: MKLNISFPATGCQKLIEVDDERNVRTFYEKRMATEVAADSLGEEWKGYVVRISGGNDKQGFPMKQGVLTHGRVRLLLSKGHSCYRPRRTGERKRKSVRGCIVDANLSVLNLVIVKKGEKDIPGLTDTTVPRRLGPKRASRIRKLFNLSKEDDVRQYVVRKPLNKEGKKPRTKAPKIQRLVTPRVLQHKRRRIALKKQRTQKNKEEAADYAKLLAKRMKEAKEKRQEQIAKRRRLSSLRASTSKSESSQK.

The segment covering 216 to 229 (RMKEAKEKRQEQIA) has biased composition (basic and acidic residues). The disordered stretch occupies residues 216-249 (RMKEAKEKRQEQIAKRRRLSSLRASTSKSESSQK). 5 positions are modified to phosphoserine: S235, S236, S240, S244, and S247. Residues 236–249 (SLRASTSKSESSQK) show a composition bias toward low complexity.

This sequence belongs to the eukaryotic ribosomal protein eS6 family. As to quaternary structure, component of the small ribosomal subunit. Part of the small subunit (SSU) processome, composed of more than 70 proteins and the RNA chaperone small nucleolar RNA (snoRNA) U3. Post-translationally, ribosomal protein S6 is the major substrate of protein kinases in eukaryote ribosomes. The phosphorylation is stimulated by growth factors, tumor promoting agents, and mitogens. It is dephosphorylated at growth arrest.

It localises to the cytoplasm. Its subcellular location is the nucleus. The protein localises to the nucleolus. Component of the 40S small ribosomal subunit. Plays an important role in controlling cell growth and proliferation through the selective translation of particular classes of mRNA. Part of the small subunit (SSU) processome, first precursor of the small eukaryotic ribosomal subunit. During the assembly of the SSU processome in the nucleolus, many ribosome biogenesis factors, an RNA chaperone and ribosomal proteins associate with the nascent pre-rRNA and work in concert to generate RNA folding, modifications, rearrangements and cleavage as well as targeted degradation of pre-ribosomal RNA by the RNA exosome. This is Small ribosomal subunit protein eS6 (RPS6) from Gallus gallus (Chicken).